Here is a 313-residue protein sequence, read N- to C-terminus: MEEYKEIMQNKKGKVDVTPIANFFREEVKQQITKNCWKPRVVAFLTSDDQGAIDYSKWTKLACQKDGIEFILKRVERVDLEDLIIEANNDSCVHGILVYYPVFGGMMDSYLQDVVSPTKDIEGLSTQNRFNLYHNIRFMDGETATKKCVIPCTPLAMVKIIDNLGIYDKSLAMGEHLKGKTVTIVNRSEIVGRPLAAMLANDGAIVYSIDINGIIIFQSGKRHGTIKMSETNVTREEAISKSDILILGVPSPNYKVNSDLIQDGTIVINFAGCLNVDESIQEKSILVPTIGKVTIAMLERNLLRLFNNQISNK.

C152 is a catalytic residue. NAD(+) is bound by residues 187 to 188 (RS), 210 to 211 (DI), and 270 to 272 (FAG).

The protein belongs to the tetrahydrofolate dehydrogenase/cyclohydrolase family. As to quaternary structure, homodimer.

It carries out the reaction (6R)-5,10-methylene-5,6,7,8-tetrahydrofolate + NAD(+) = (6R)-5,10-methenyltetrahydrofolate + NADH. It participates in one-carbon metabolism; tetrahydrofolate interconversion. In terms of biological role, catalyzes oxidation of cytoplasmic one-carbon units for purine biosynthesis. In Dictyostelium discoideum (Social amoeba), this protein is Methylenetetrahydrofolate dehydrogenase [NAD(+)] (thfA).